The primary structure comprises 165 residues: Large ribosomal subunit protein uL11A (165 aa).

Residue Pro-2 is modified to N,N-dimethylproline; by NTM1. Lys-4 and Lys-11 each carry N6,N6,N6-trimethyllysine; by RKM2. Ser-25 and Ser-38 each carry phosphoserine. The residue at position 67 (Arg-67) is an N5-methylarginine; by RMT2. Residues Lys-130 and Lys-146 each participate in a glycyl lysine isopeptide (Lys-Gly) (interchain with G-Cter in ubiquitin) cross-link.

Belongs to the universal ribosomal protein uL11 family. As to quaternary structure, component of the large ribosomal subunit (LSU). Mature yeast ribosomes consist of a small (40S) and a large (60S) subunit. The 40S small subunit contains 1 molecule of ribosomal RNA (18S rRNA) and 33 different proteins (encoded by 57 genes). The large 60S subunit contains 3 rRNA molecules (25S, 5.8S and 5S rRNA) and 46 different proteins (encoded by 81 genes). In terms of processing, it appears that the main modified species for L12 contains 6 methyl groups, 2 on Pro-2, 3 on Lys-4 and 1 on Arg-67. Although not reproduced with a second method, methylation at Lys-11 cannot be ruled out.

The protein localises to the cytoplasm. Its function is as follows. Component of the ribosome, a large ribonucleoprotein complex responsible for the synthesis of proteins in the cell. The small ribosomal subunit (SSU) binds messenger RNAs (mRNAs) and translates the encoded message by selecting cognate aminoacyl-transfer RNA (tRNA) molecules. The large subunit (LSU) contains the ribosomal catalytic site termed the peptidyl transferase center (PTC), which catalyzes the formation of peptide bonds, thereby polymerizing the amino acids delivered by tRNAs into a polypeptide chain. The nascent polypeptides leave the ribosome through a tunnel in the LSU and interact with protein factors that function in enzymatic processing, targeting, and the membrane insertion of nascent chains at the exit of the ribosomal tunnel. This chain is Large ribosomal subunit protein uL11A, found in Saccharomyces cerevisiae (strain ATCC 204508 / S288c) (Baker's yeast).